We begin with the raw amino-acid sequence, 420 residues long: Inheritance of peroxisomes protein 1 (420 aa).

Residues 1–10 (MVLSRGETKK) show a composition bias toward basic and acidic residues. 2 disordered regions span residues 1–75 (MVLS…QRKR) and 273–309 (SLSD…NYDD). Over residues 30–39 (LKQSLKLSNN) the composition is skewed to low complexity. Residues 45 to 56 (DSTQHSNDTNKS) show a composition bias toward polar residues. Position 273 is a phosphoserine (Ser-273). Acidic residues predominate over residues 295 to 309 (NNDDDNDDDDDNYDD).

The protein belongs to the INP1 family. As to quaternary structure, interacts with PEX25, PEX30 and VPS1.

The protein localises to the peroxisome membrane. In terms of biological role, required for peroxisome inheritance. The sequence is that of Inheritance of peroxisomes protein 1 (INP1) from Saccharomyces cerevisiae (strain ATCC 204508 / S288c) (Baker's yeast).